The primary structure comprises 279 residues: Putative polysaccharide deacetylase YxkH (279 aa).

The N-terminal stretch at 1-19 is a signal peptide; that stretch reads MKRLFLSIFLLGSCLALAA. Cys-20 carries N-palmitoyl cysteine lipidation. Cys-20 is lipidated: S-diacylglycerol cysteine. The disordered stretch occupies residues 29 to 51; sequence QPMPKAEQKKPEKKAVQVQKKED. Residues 34–51 are compositionally biased toward basic and acidic residues; the sequence is AEQKKPEKKAVQVQKKED. Positions 119–279 constitute a NodB homology domain; sequence KCVLITFDDG…AFGAYIESMK (161 aa).

It belongs to the polysaccharide deacetylase family.

The protein resides in the cell membrane. The chain is Putative polysaccharide deacetylase YxkH (yxkH) from Bacillus subtilis (strain 168).